The chain runs to 255 residues: Thiazole synthase (255 aa).

K97 (schiff-base intermediate with DXP) is an active-site residue. 1-deoxy-D-xylulose 5-phosphate is bound by residues G158, 184–185, and 206–207; these read AG and NT.

Belongs to the ThiG family. In terms of assembly, homotetramer. Forms heterodimers with either ThiH or ThiS.

It localises to the cytoplasm. The enzyme catalyses [ThiS sulfur-carrier protein]-C-terminal-Gly-aminoethanethioate + 2-iminoacetate + 1-deoxy-D-xylulose 5-phosphate = [ThiS sulfur-carrier protein]-C-terminal Gly-Gly + 2-[(2R,5Z)-2-carboxy-4-methylthiazol-5(2H)-ylidene]ethyl phosphate + 2 H2O + H(+). It functions in the pathway cofactor biosynthesis; thiamine diphosphate biosynthesis. Catalyzes the rearrangement of 1-deoxy-D-xylulose 5-phosphate (DXP) to produce the thiazole phosphate moiety of thiamine. Sulfur is provided by the thiocarboxylate moiety of the carrier protein ThiS. In vitro, sulfur can be provided by H(2)S. In Acetivibrio thermocellus (strain ATCC 27405 / DSM 1237 / JCM 9322 / NBRC 103400 / NCIMB 10682 / NRRL B-4536 / VPI 7372) (Clostridium thermocellum), this protein is Thiazole synthase.